We begin with the raw amino-acid sequence, 75 residues long: OcyC3 (75 aa).

The signal sequence occupies residues 1-22 (MQYKTFLVISLAYLLVADEAAA). The propeptide occupies 51–75 (EINNVFEPYHENLDLELERFLSQLQ).

In terms of tissue distribution, expressed by the venom gland.

It is found in the secreted. Its subcellular location is the target cell membrane. Functionally, amphipathic peptide with probable antimicrobial activity. May act by disrupting the integrity of the bacterial cell membrane. This is OcyC3 from Opisthacanthus cayaporum (South American scorpion).